The following is an 88-amino-acid chain: DNA-directed RNA polymerase subunit omega (88 aa).

This sequence belongs to the RNA polymerase subunit omega family. The RNAP catalytic core consists of 2 alpha, 1 beta, 1 beta' and 1 omega subunit. When a sigma factor is associated with the core the holoenzyme is formed, which can initiate transcription.

It catalyses the reaction RNA(n) + a ribonucleoside 5'-triphosphate = RNA(n+1) + diphosphate. In terms of biological role, promotes RNA polymerase assembly. Latches the N- and C-terminal regions of the beta' subunit thereby facilitating its interaction with the beta and alpha subunits. The sequence is that of DNA-directed RNA polymerase subunit omega from Haemophilus influenzae (strain 86-028NP).